The sequence spans 350 residues: tRNA uridine(34) hydroxylase (350 aa).

In terms of domain architecture, Rhodanese spans 146–240 (DDPDAIFIDM…YARRAREQGL (95 aa)). The active-site Cysteine persulfide intermediate is the cysteine 200. The segment at 318-350 (QRRRRAGREKGNKIFNKSRGRLNSKLGIPDPTE) is disordered.

The protein belongs to the TrhO family.

It carries out the reaction uridine(34) in tRNA + AH2 + O2 = 5-hydroxyuridine(34) in tRNA + A + H2O. Functionally, catalyzes oxygen-dependent 5-hydroxyuridine (ho5U) modification at position 34 in tRNAs. This Salmonella arizonae (strain ATCC BAA-731 / CDC346-86 / RSK2980) protein is tRNA uridine(34) hydroxylase.